A 64-amino-acid chain; its full sequence is MTGVRVKDGESFENAMKRFKKQCEKAGILSEIRKREHYEKPSVKRKKKALAAKKRALKKMRKGF.

This sequence belongs to the bacterial ribosomal protein bS21 family.

In Anaeromyxobacter dehalogenans (strain 2CP-1 / ATCC BAA-258), this protein is Small ribosomal subunit protein bS21.